A 103-amino-acid chain; its full sequence is Large ribosomal subunit protein bL21 (103 aa).

The protein belongs to the bacterial ribosomal protein bL21 family. Part of the 50S ribosomal subunit. Contacts protein L20.

This protein binds to 23S rRNA in the presence of protein L20. The sequence is that of Large ribosomal subunit protein bL21 from Escherichia coli O127:H6 (strain E2348/69 / EPEC).